The sequence spans 814 residues: MAKAAASSALEDLDLSREEVQRFTSAFQDPEFRRMFSEYAAEITDPENRRRYEEEITALERERGVDVRFVHPEPGHVLRTSLDGEHRCYVNVCSNSLVGVPSSRPGPGRGGTAAGSHWSLPYSLAPGRQYAGRNGARYTVYDVVFHPEALALARSHERFREMLDATALEAVEQQFGVRLDRRNAKTLKIKYKGMPEAAVLRTPLPGGVPAQPEGEPPGLFPDPPYPYRYPAAAAANTARSPASPAPEAVQRPEPTEPRCSVVQRHHVDLQDYRCSRDAAPSTVPHELVVTIELPLLRSVERAELEVKGKLLCLDSRNPDYRLRLSLPYPVDDGRGKAQYNKARRQLVVTLPVALADARQEPPAATPEEPAEETGTDDVARTSAGDFAAAREESADGTGADHGEKSGVGAPDPGAAHAEGELVPEPEQDFGGDSVAPLDLGKGTSPGDRSLPYSAFPGGDTESLCGDPGVQTNEEQERTRHDTAGSAMGDPGTESIAPVCPPLQCNQDEDSLTLLIQVPGILPQTLHGHLSPVGYELCFSTQDSGYSCTLQFAPENKLSTREPETSVSLNNAVIVLAKSPESHGLWREWYCGLNKESLEERLFINEENVNGFLEEVLCSPLKQARSLAPPLIEVLQATDEQVQIHAELQECSDPAGLQGKGKGVREGCPLSEAEAADQSATSPAASDSAAAVEALKINTHGSAVDLQHGCPEVPHVLSGKPLQPEAKMDPEFIRESSTTYSTEEKENIREPVISKGEKINGDHPSSLLNKTVVQNIPDFDTIKETNMQDGSVQIIRDHTTHCAFSFQNPLLYDLD.

A compositionally biased stretch (low complexity) spans A234–P246. Disordered regions lie at residues A234–C259 and A357–P490. Residues A388–K404 show a composition bias toward basic and acidic residues. Phosphoserine is present on residues S444 and S618. The segment at A654–D686 is disordered. Positions A675–D686 are enriched in low complexity.

It belongs to the PIH1 family. Kintoun subfamily. In terms of assembly, interacts with DNAI2 and HSPA1A. Interacts with CFAP300. Interacts with DNAAF4. Interacts with DNAAF6/PIH1D3. As to expression, expressed in nearly all organs of adult, with higher expression in tissues known to have motile cilia and flagella, such as brain and testis.

The protein localises to the cytoplasm. Its subcellular location is the dynein axonemal particle. Required for cytoplasmic pre-assembly of axonemal dyneins, thereby playing a central role in motility in cilia and flagella. Involved in pre-assembly of dynein arm complexes in the cytoplasm before intraflagellar transport loads them for the ciliary compartment. The sequence is that of Protein kintoun from Mus musculus (Mouse).